The sequence spans 356 residues: Iron-regulated protein A (356 aa).

Residues 1-44 (MIVTGSQVRQGLNTWFVLPLRRTAIGLGCAGVATLFSACGQTQA) form the signal peptide. 2 hydrophilic regions span residues 75-145 (QALQ…EQRE) and 240-310 (GGPL…ATAR).

As to quaternary structure, the iron-regulated protein A is one unit of the protein complex CPVI-4, which is synthesized under iron deficient conditions.

It is found in the cell inner membrane. IrpA occurs under iron-deficient growth conditions in cyanobacterium Synechococcus and disappears in cells recovering from iron starvation. It seems to be involved in iron acquisition, uptake or storage. This chain is Iron-regulated protein A (irpA), found in Synechococcus elongatus (strain ATCC 33912 / PCC 7942 / FACHB-805) (Anacystis nidulans R2).